Here is a 504-residue protein sequence, read N- to C-terminus: Maturase K (504 aa).

The protein belongs to the intron maturase 2 family. MatK subfamily.

Its subcellular location is the plastid. It localises to the chloroplast. In terms of biological role, usually encoded in the trnK tRNA gene intron. Probably assists in splicing its own and other chloroplast group II introns. The polypeptide is Maturase K (Kokia drynarioides (Hawaiian tree cotton)).